Here is a 269-residue protein sequence, read N- to C-terminus: Glucosyl-3-phosphoglycerate/mannosyl-3-phosphoglycerate phosphatase (269 aa).

The active-site Nucleophile is the D6. 3 residues coordinate Mg(2+): D6, D8, and D210.

Belongs to the HAD-like hydrolase superfamily. MPGP family. Monomer. It depends on Co(2+) as a cofactor. The cofactor is Mg(2+).

The enzyme catalyses (2R)-2-O-(alpha-D-glucopyranosyl)-3-phospho-glycerate + H2O = (2R)-2-O-(alpha-D-glucopyranosyl)-glycerate + phosphate. It catalyses the reaction 2-O-(alpha-D-mannosyl)-3-phosphoglycerate + H2O = (2R)-2-O-(alpha-D-mannosyl)-glycerate + phosphate. In terms of biological role, involved in the biosynthesis of glucosylglycerate. Catalyzes the dephosphorylation of glucosyl-3-phosphoglycerate (GPG) and mannosyl-3-phosphoglycerate (MPG) to glucosylglycerate (GG) and mannosylglycerate (MG), respectively. This is Glucosyl-3-phosphoglycerate/mannosyl-3-phosphoglycerate phosphatase from Persephonella marina (strain DSM 14350 / EX-H1).